We begin with the raw amino-acid sequence, 256 residues long: Ras-related protein Rab-26 (256 aa).

The segment at methionine 1 to proline 51 is disordered. A compositionally biased stretch (low complexity) spans alanine 12–alanine 23. Residues serine 72, glycine 73, valine 74, glycine 75, lysine 76, threonine 77, cysteine 78, serine 95, and threonine 96 each contribute to the GTP site. A Mg(2+)-binding site is contributed by threonine 77. 2 short sequence motifs (switch) span residues glycine 86–phenylalanine 101 and aspartate 119–aspartate 136. Mg(2+)-binding residues include threonine 96 and aspartate 119. Glycine 122, asparagine 177, lysine 178, aspartate 180, alanine 208, and lysine 209 together coordinate GTP. S-geranylgeranyl cysteine attachment occurs at residues cysteine 253 and cysteine 254.

The protein belongs to the small GTPase superfamily. Rab family. As to quaternary structure, interacts with RIMS1. Interacts with ADRA2B. Requires Mg(2+) as cofactor. As to expression, predominantly expressed in brain.

It localises to the golgi apparatus membrane. The protein resides in the cytoplasmic vesicle. The protein localises to the secretory vesicle membrane. The enzyme catalyses GTP + H2O = GDP + phosphate + H(+). Its activity is regulated as follows. Regulated by guanine nucleotide exchange factors (GEFs) which promote the exchange of bound GDP for free GTP. Regulated by GTPase activating proteins (GAPs) which increase the GTP hydrolysis activity. Inhibited by GDP dissociation inhibitors (GDIs). In terms of biological role, the small GTPases Rab are key regulators of intracellular membrane trafficking, from the formation of transport vesicles to their fusion with membranes. Rabs cycle between an inactive GDP-bound form and an active GTP-bound form that is able to recruit to membranes different set of downstream effectors directly responsible for vesicle formation, movement, tethering and fusion. RAB26 mediates transport of ADRA2A and ADRA2B from the Golgi to the cell membrane. Plays a role in the maturation of zymogenic granules and in pepsinogen secretion in the stomach. Plays a role in the secretion of amylase from acinar granules in the parotid gland. This chain is Ras-related protein Rab-26, found in Homo sapiens (Human).